Here is a 151-residue protein sequence, read N- to C-terminus: Nucleoside diphosphate kinase (151 aa).

Residues K11, F59, R87, T93, R104, and N114 each coordinate ATP. H117 acts as the Pros-phosphohistidine intermediate in catalysis.

The protein belongs to the NDK family. As to quaternary structure, homotetramer. The cofactor is Mg(2+).

The protein resides in the cytoplasm. The enzyme catalyses a 2'-deoxyribonucleoside 5'-diphosphate + ATP = a 2'-deoxyribonucleoside 5'-triphosphate + ADP. The catalysed reaction is a ribonucleoside 5'-diphosphate + ATP = a ribonucleoside 5'-triphosphate + ADP. Its function is as follows. Major role in the synthesis of nucleoside triphosphates other than ATP. The ATP gamma phosphate is transferred to the NDP beta phosphate via a ping-pong mechanism, using a phosphorylated active-site intermediate. In Prochlorococcus marinus (strain SARG / CCMP1375 / SS120), this protein is Nucleoside diphosphate kinase.